The primary structure comprises 464 residues: Argininosuccinate lyase (464 aa).

Belongs to the lyase 1 family. Argininosuccinate lyase subfamily.

Its subcellular location is the cytoplasm. The catalysed reaction is 2-(N(omega)-L-arginino)succinate = fumarate + L-arginine. The protein operates within amino-acid biosynthesis; L-arginine biosynthesis; L-arginine from L-ornithine and carbamoyl phosphate: step 3/3. The polypeptide is Argininosuccinate lyase (Crocosphaera subtropica (strain ATCC 51142 / BH68) (Cyanothece sp. (strain ATCC 51142))).